The sequence spans 150 residues: Large ribosomal subunit protein bL9 (150 aa).

It belongs to the bacterial ribosomal protein bL9 family.

Its function is as follows. Binds to the 23S rRNA. This chain is Large ribosomal subunit protein bL9, found in Yersinia pseudotuberculosis serotype I (strain IP32953).